The primary structure comprises 383 residues: Acetylornithine deacetylase (383 aa).

Residue H80 participates in Zn(2+) binding. Residue D82 is part of the active site. Residue D112 participates in Zn(2+) binding. Residue E144 is part of the active site. 3 residues coordinate Zn(2+): E145, E169, and H355.

This sequence belongs to the peptidase M20A family. ArgE subfamily. As to quaternary structure, homodimer. It depends on Zn(2+) as a cofactor. The cofactor is Co(2+). Glutathione is required as a cofactor.

Its subcellular location is the cytoplasm. The enzyme catalyses N(2)-acetyl-L-ornithine + H2O = L-ornithine + acetate. Its pathway is amino-acid biosynthesis; L-arginine biosynthesis; L-ornithine from N(2)-acetyl-L-ornithine (linear): step 1/1. Its function is as follows. Catalyzes the hydrolysis of the amide bond of N(2)-acetylated L-amino acids. Cleaves the acetyl group from N-acetyl-L-ornithine to form L-ornithine, an intermediate in L-arginine biosynthesis pathway, and a branchpoint in the synthesis of polyamines. In Escherichia coli O8 (strain IAI1), this protein is Acetylornithine deacetylase.